The chain runs to 199 residues: Putative pseudouridine methyltransferase (199 aa).

Residues M132 and C186 each contribute to the S-adenosyl-L-methionine site.

This sequence belongs to the methyltransferase superfamily. TrmY family.

The protein resides in the cytoplasm. The protein is Putative pseudouridine methyltransferase of Vibrio atlanticus (strain LGP32) (Vibrio splendidus (strain Mel32)).